The following is a 690-amino-acid chain: Elongation factor G (690 aa).

The tr-type G domain occupies 8–282 (KMTRNIGIMA…AVIDYLPSPL (275 aa)). Residues 17 to 24 (AHIDAGKT), 81 to 85 (DTPGH), and 135 to 138 (NKMD) contribute to the GTP site.

The protein belongs to the TRAFAC class translation factor GTPase superfamily. Classic translation factor GTPase family. EF-G/EF-2 subfamily.

It localises to the cytoplasm. In terms of biological role, catalyzes the GTP-dependent ribosomal translocation step during translation elongation. During this step, the ribosome changes from the pre-translocational (PRE) to the post-translocational (POST) state as the newly formed A-site-bound peptidyl-tRNA and P-site-bound deacylated tRNA move to the P and E sites, respectively. Catalyzes the coordinated movement of the two tRNA molecules, the mRNA and conformational changes in the ribosome. This chain is Elongation factor G, found in Acholeplasma laidlawii (strain PG-8A).